The primary structure comprises 155 residues: Interleukin-2 (155 aa).

Positions 1-20 (MYSRQLASCVALALVLLANS) are cleaved as a signal peptide. Threonine 23 is a glycosylation site (O-linked (GalNAc...) threonine). Cysteine 78 and cysteine 126 form a disulfide bridge.

This sequence belongs to the IL-2 family.

The protein localises to the secreted. Cytokine produced by activated CD4-positive helper T-cells and to a lesser extend activated CD8-positive T-cells and natural killer (NK) cells that plays pivotal roles in the immune response and tolerance. Binds to a receptor complex composed of either the high-affinity trimeric IL-2R (IL2RA/CD25, IL2RB/CD122 and IL2RG/CD132) or the low-affinity dimeric IL-2R (IL2RB and IL2RG). Interaction with the receptor leads to oligomerization and conformation changes in the IL-2R subunits resulting in downstream signaling starting with phosphorylation of JAK1 and JAK3. In turn, JAK1 and JAK3 phosphorylate the receptor to form a docking site leading to the phosphorylation of several substrates including STAT5. This process leads to activation of several pathways including STAT, phosphoinositide-3-kinase/PI3K and mitogen-activated protein kinase/MAPK pathways. Functions as a T-cell growth factor and can increase NK-cell cytolytic activity as well. Promotes strong proliferation of activated B-cells and subsequently immunoglobulin production. Plays a pivotal role in regulating the adaptive immune system by controlling the survival and proliferation of regulatory T-cells, which are required for the maintenance of immune tolerance. Moreover, participates in the differentiation and homeostasis of effector T-cell subsets, including Th1, Th2, Th17 as well as memory CD8-positive T-cells. The protein is Interleukin-2 (IL2) of Meriones unguiculatus (Mongolian jird).